The sequence spans 397 residues: Transcription factor GATA-5 (397 aa).

The interval 48–116 is disordered; sequence GCEPSPQPPE…SAGGRDGSAY (69 aa). The segment covering 87–101 has biased composition (low complexity); that stretch reads PPGATAFPFAHSPSG. The span at 102–112 shows a compositional bias: gly residues; the sequence is PGSGGSAGGRD. GATA-type zinc fingers lie at residues 189 to 213 and 243 to 267; these read CVNC…CNAC and CTNC…CNAC. The disordered stretch occupies residues 281 to 356; that stretch reads AMKKESIQTR…ASGQEDDSLA (76 aa). A compositionally biased stretch (basic residues) spans 289-298; sequence TRKRKPKTIA. Positions 310 to 335 are enriched in low complexity; that stretch reads ASASPSAVASTDSSAATSKAKPSLAS.

The protein localises to the nucleus. Functionally, transcription factor required during cardiovascular development. Plays an important role in the transcriptional program(s) that underlies smooth muscle cell diversity. Binds to the functionally important CEF-1 nuclear protein binding site in the cardiac-specific slow/cardiac troponin C transcriptional enhancer. The chain is Transcription factor GATA-5 from Homo sapiens (Human).